Reading from the N-terminus, the 464-residue chain is Siroheme synthase (464 aa).

The segment at 1–203 (MEFLPLFHNL…GQGDEAERLL (203 aa)) is precorrin-2 dehydrogenase /sirohydrochlorin ferrochelatase. Residues 22–23 (EI) and 43–44 (PQ) contribute to the NAD(+) site. The residue at position 128 (Ser128) is a Phosphoserine. The interval 216 to 464 (GEVYLVGAGP…KWFEGAQSQV (249 aa)) is uroporphyrinogen-III C-methyltransferase. Pro225 contributes to the S-adenosyl-L-methionine binding site. The active-site Proton acceptor is the Asp248. Lys270 acts as the Proton donor in catalysis. Residues 301 to 303 (GGD), Ile306, 331 to 332 (TA), Met383, and Gly412 contribute to the S-adenosyl-L-methionine site.

It in the N-terminal section; belongs to the precorrin-2 dehydrogenase / sirohydrochlorin ferrochelatase family. This sequence in the C-terminal section; belongs to the precorrin methyltransferase family.

It carries out the reaction uroporphyrinogen III + 2 S-adenosyl-L-methionine = precorrin-2 + 2 S-adenosyl-L-homocysteine + H(+). The enzyme catalyses precorrin-2 + NAD(+) = sirohydrochlorin + NADH + 2 H(+). The catalysed reaction is siroheme + 2 H(+) = sirohydrochlorin + Fe(2+). It participates in cofactor biosynthesis; adenosylcobalamin biosynthesis; precorrin-2 from uroporphyrinogen III: step 1/1. Its pathway is cofactor biosynthesis; adenosylcobalamin biosynthesis; sirohydrochlorin from precorrin-2: step 1/1. It functions in the pathway porphyrin-containing compound metabolism; siroheme biosynthesis; precorrin-2 from uroporphyrinogen III: step 1/1. The protein operates within porphyrin-containing compound metabolism; siroheme biosynthesis; siroheme from sirohydrochlorin: step 1/1. It participates in porphyrin-containing compound metabolism; siroheme biosynthesis; sirohydrochlorin from precorrin-2: step 1/1. Functionally, multifunctional enzyme that catalyzes the SAM-dependent methylations of uroporphyrinogen III at position C-2 and C-7 to form precorrin-2 via precorrin-1. Then it catalyzes the NAD-dependent ring dehydrogenation of precorrin-2 to yield sirohydrochlorin. Finally, it catalyzes the ferrochelation of sirohydrochlorin to yield siroheme. This is Siroheme synthase from Pseudomonas fluorescens (strain SBW25).